A 172-amino-acid chain; its full sequence is RNA silencing suppressor p19 (172 aa).

The segment covering 1–20 has biased composition (basic and acidic residues); the sequence is MERVIQGNDAREQANGERWD. Positions 1-37 are disordered; sequence MERVIQGNDAREQANGERWDGGSGGTTSGFKLPDESP.

It belongs to the tombusvirus protein p19 family. Homodimer.

Functionally, viral suppressor of RNA silencing which binds specifically to silencing RNAs (siRNAs). Acts as a molecular caliper to specifically select siRNAs based on the length of the duplex region of the RNA. The sequence is that of RNA silencing suppressor p19 from Cynara cardunculus var. scolymus (Globe artichoke).